Consider the following 25-residue polypeptide: Flagellar filament core protein flaB3 (25 aa).

The protein belongs to the bacterial flagellin family. As to quaternary structure, the flagellum consists of an outer layer composed of two sheath proteins, flaA1 (44 kDa) and flaA2 (35 kDa) around a core that contains three proteins flaB1 (37 kDa), flaB2 (34 kDa) and flaB3 (32 kDa).

The protein localises to the periplasmic flagellum. Its subcellular location is the periplasm. In terms of biological role, component of the core of the flagella. The polypeptide is Flagellar filament core protein flaB3 (flaB3) (Brachyspira hyodysenteriae (Treponema hyodysenteriae)).